Consider the following 38-residue polypeptide: Toxin Lqh 8/6 (38 aa).

Disulfide bonds link C2-C19, C5-C28, C16-C33, and C20-C35.

As to expression, expressed by the venom gland.

It localises to the secreted. Functionally, toxin with unknown function in healthy organisms. On glioma cells, interacts with chloride channels (probably ClC-3/CLCN3) and MMP2 at the surface of glioma cells. This complex is then internalized via caveolae, thus inhibiting the chloride channels necessary for cell shrinkage and tumor propagation. This Leiurus hebraeus (Hebrew deathstalker scorpion) protein is Toxin Lqh 8/6.